Consider the following 344-residue polypeptide: L-rhamnose-proton symporter (344 aa).

10 helical membrane-spanning segments follow: residues 4–24 (AITMGIFWHLIGAASAACFYA), 38–58 (WSVGGTVSWLILPWTISAILL), 72–92 (TLLPVFLFGAMWGIGNINYGL), 101–121 (MGIGIAIGITLIVGTLMTPIL), 137–157 (TLLGVLVAVIGVGIVTRAGQL), 175–195 (LVLAVMCGIFSAGMSFAMNAA), 214–234 (LPSYVVIMGGGALVNLGFCFI), 259–279 (VLLSALGGLMWYLQFFFYAWG), 290–310 (MSWMLHMSFYVLCGGMVGLVL), and 321–341 (VGVLSLGCVVIIIAANIVGLG).

The protein belongs to the L-rhamnose transporter (TC 2.A.7.6) family.

It localises to the cell inner membrane. The catalysed reaction is L-rhamnopyranose(in) + H(+)(in) = L-rhamnopyranose(out) + H(+)(out). Functionally, uptake of L-rhamnose across the cytoplasmic membrane with the concomitant transport of protons into the cell (symport system). This is L-rhamnose-proton symporter from Enterobacter sp. (strain 638).